The following is a 375-amino-acid chain: E3 ubiquitin-protein ligase FANCL (375 aa).

The segment at 104-294 (QPPSCSFCKD…KDVLEIDFPA (191 aa)) is UBC-RWD region (URD). The RING-type; degenerate zinc-finger motif lies at 307–363 (CGICYARHLNGAIPDQVCNNPQCGQPFHEICLYEWLRGLSTSRQSFNVFFGDCPYCS).

In terms of assembly, belongs to the multisubunit FA complex composed of FANCA, FANCB, FANCC, FANCE, FANCF, FANCG, FANCL/PHF9 and FANCM. In complex with FANCF, FANCA and FANCG, but not with FANCC, nor FANCE, interacts with HES1; this interaction may be essential for the stability and nuclear localization of FA core complex proteins. Interacts with FANCI. Interacts with GGN. Interacts (via the RING-type zinc finger) with UBE2T and UBE2W. The RING-type zinc finger domain is monoubiquitinated in the presence of UBE2T and UBE2W.

It localises to the cytoplasm. It is found in the nucleus. The enzyme catalyses S-ubiquitinyl-[E2 ubiquitin-conjugating enzyme]-L-cysteine + [acceptor protein]-L-lysine = [E2 ubiquitin-conjugating enzyme]-L-cysteine + N(6)-ubiquitinyl-[acceptor protein]-L-lysine.. It participates in protein modification; protein ubiquitination. Its function is as follows. Ubiquitin ligase protein that mediates monoubiquitination of FANCD2, a key step in the DNA damage pathway. Also mediates monoubiquitination of FANCI. May stimulate the ubiquitin release from UBE2W. May be required for proper primordial germ cell proliferation in the embryonic stage, whereas it is probably not needed for spermatogonial proliferation after birth. The sequence is that of E3 ubiquitin-protein ligase FANCL (Fancl) from Mus musculus (Mouse).